We begin with the raw amino-acid sequence, 906 residues long: Formin-like protein 18 (906 aa).

Positions 1–25 (MSKLRWLIMAFLVCLLLLTPKDLEG) are cleaved as a signal peptide. Residues 120–140 (MVVVGLSAACVALVTLVGICF) traverse the membrane as a helical segment. 2 disordered regions span residues 267–416 (AGGG…QADP) and 854–906 (NAKA…DSDD). The segment covering 274–292 (AAPPPPAGPPPPAPPPLPP) has biased composition (pro residues). Over residues 293-303 (SHHHHHGHHPP) the composition is skewed to basic residues. Composition is skewed to pro residues over residues 320–339 (APPP…PAPS), 348–375 (GPPP…PPPG), and 383–402 (GPPP…PPFK). 2 stretches are compositionally biased toward low complexity: residues 403–416 (KSPG…QADP) and 854–877 (NAKA…QSSF). Positions 411 to 866 (AAQADPNKAK…AKKQQQPTPA (456 aa)) constitute an FH2 domain. Basic and acidic residues predominate over residues 878–889 (RDPRQQIQDRRA). Over residues 897-906 (SSSSSSDSDD) the composition is skewed to low complexity.

This sequence belongs to the formin-like family. Class-I subfamily.

The protein localises to the membrane. This chain is Formin-like protein 18 (FH18), found in Oryza sativa subsp. japonica (Rice).